The following is a 144-amino-acid chain: Transcription antitermination protein NusB (144 aa).

It belongs to the NusB family.

Its function is as follows. Involved in transcription antitermination. Required for transcription of ribosomal RNA (rRNA) genes. Binds specifically to the boxA antiterminator sequence of the ribosomal RNA (rrn) operons. The polypeptide is Transcription antitermination protein NusB (Haemophilus influenzae (strain PittEE)).